We begin with the raw amino-acid sequence, 303 residues long: UDP-N-acetylenolpyruvoylglucosamine reductase (303 aa).

Residues 29-196 (KIGGPADILI…LEAVLQLEQK (168 aa)) form the FAD-binding PCMH-type domain. R174 is an active-site residue. S225 functions as the Proton donor in the catalytic mechanism. E295 is an active-site residue.

Belongs to the MurB family. FAD is required as a cofactor.

The protein localises to the cytoplasm. It catalyses the reaction UDP-N-acetyl-alpha-D-muramate + NADP(+) = UDP-N-acetyl-3-O-(1-carboxyvinyl)-alpha-D-glucosamine + NADPH + H(+). It functions in the pathway cell wall biogenesis; peptidoglycan biosynthesis. Functionally, cell wall formation. This Bacillus velezensis (strain DSM 23117 / BGSC 10A6 / LMG 26770 / FZB42) (Bacillus amyloliquefaciens subsp. plantarum) protein is UDP-N-acetylenolpyruvoylglucosamine reductase.